The chain runs to 476 residues: Bifunctional protein HldE (476 aa).

A ribokinase region spans residues 1–318; it reads MKVTLPDFRR…ENAIRGRAET (318 aa). An ATP-binding site is contributed by 195 to 198; that stretch reads NLSE. D264 is a catalytic residue. The tract at residues 344 to 476 is cytidylyltransferase; sequence MTNGIFDILH…IIQSIKNGLG (133 aa).

It in the N-terminal section; belongs to the carbohydrate kinase PfkB family. The protein in the C-terminal section; belongs to the cytidylyltransferase family. As to quaternary structure, homodimer.

It carries out the reaction D-glycero-beta-D-manno-heptose 7-phosphate + ATP = D-glycero-beta-D-manno-heptose 1,7-bisphosphate + ADP + H(+). The catalysed reaction is D-glycero-beta-D-manno-heptose 1-phosphate + ATP + H(+) = ADP-D-glycero-beta-D-manno-heptose + diphosphate. Its pathway is nucleotide-sugar biosynthesis; ADP-L-glycero-beta-D-manno-heptose biosynthesis; ADP-L-glycero-beta-D-manno-heptose from D-glycero-beta-D-manno-heptose 7-phosphate: step 1/4. It participates in nucleotide-sugar biosynthesis; ADP-L-glycero-beta-D-manno-heptose biosynthesis; ADP-L-glycero-beta-D-manno-heptose from D-glycero-beta-D-manno-heptose 7-phosphate: step 3/4. In terms of biological role, catalyzes the phosphorylation of D-glycero-D-manno-heptose 7-phosphate at the C-1 position to selectively form D-glycero-beta-D-manno-heptose-1,7-bisphosphate. Its function is as follows. Catalyzes the ADP transfer from ATP to D-glycero-beta-D-manno-heptose 1-phosphate, yielding ADP-D-glycero-beta-D-manno-heptose. This chain is Bifunctional protein HldE, found in Yersinia enterocolitica serotype O:8 / biotype 1B (strain NCTC 13174 / 8081).